A 295-amino-acid chain; its full sequence is NAD kinase (295 aa).

Asp74 serves as the catalytic Proton acceptor. NAD(+)-binding positions include 74-75 (DG), 148-149 (NE), Arg176, Asp178, and 189-194 (TAYAMS).

The protein belongs to the NAD kinase family. It depends on a divalent metal cation as a cofactor.

The protein resides in the cytoplasm. The catalysed reaction is NAD(+) + ATP = ADP + NADP(+) + H(+). Its function is as follows. Involved in the regulation of the intracellular balance of NAD and NADP, and is a key enzyme in the biosynthesis of NADP. Catalyzes specifically the phosphorylation on 2'-hydroxyl of the adenosine moiety of NAD to yield NADP. This chain is NAD kinase, found in Acidithiobacillus ferrooxidans (strain ATCC 23270 / DSM 14882 / CIP 104768 / NCIMB 8455) (Ferrobacillus ferrooxidans (strain ATCC 23270)).